Reading from the N-terminus, the 406-residue chain is LIM/homeobox protein Lhx2 (406 aa).

LIM zinc-binding domains follow at residues 53-105 (CAGC…CKED) and 115-168 (CARC…CRLH). Positions 250 to 270 (DAEHLDRDQPYPSSQKTKRMR) are disordered. Residues 266–325 (TKRMRTSFKHHQLRTMKSYFAINHNPDAKDLKQLAQKTGLTKRVLQVWFQNARAKFRRNL) constitute a DNA-binding region (homeobox). The short motif at 307–323 (KRVLQVWFQNARAKFRR) is the Nuclear localization signal element. Positions 328–356 (QENTGVDKSTDAALQTGTPSGPASELSNA) are enriched in polar residues. 2 disordered regions span residues 328–374 (QENT…TSPT) and 387–406 (GNLE…TNLF). Residues 357 to 374 (SLSPSSTPTTLTDLTSPT) are compositionally biased toward low complexity. The span at 396–406 (SPSQTTLTNLF) shows a compositional bias: polar residues.

As to quaternary structure, interacts (via LIM domains) with CITED2. Interacts with POU4F2.

It localises to the nucleus. In terms of biological role, acts as a transcriptional activator. Stimulates the promoter of the alpha-glycoprotein gene. Transcriptional regulatory protein involved in the control of cell differentiation in developing lymphoid and neural cell types. This chain is LIM/homeobox protein Lhx2 (LHX2), found in Homo sapiens (Human).